We begin with the raw amino-acid sequence, 621 residues long: E3 SUMO-protein ligase PIAS2 (621 aa).

One can recognise an SAP domain in the interval V11–L45. Positions L19–L23 match the LXXLL motif motif. Residues K46 and K249 each participate in a glycyl lysine isopeptide (Lys-Gly) (interchain with G-Cter in SUMO2) cross-link. The region spanning Q134–L299 is the PINIT domain. The SP-RING-type zinc finger occupies P331–D412. Zn(2+)-binding residues include C362, H364, C385, and C388. Residues K430, K435, K443, and K452 each participate in a glycyl lysine isopeptide (Lys-Gly) (interchain with G-Cter in SUMO2) cross-link. An SUMO1-binding region spans residues V467–T473. Phosphoserine occurs at positions 476, 477, and 478. The Nuclear localization signal signature appears at P484 to F492. K489 is covalently cross-linked (Glycyl lysine isopeptide (Lys-Gly) (interchain with G-Cter in SUMO2)). S499 carries the phosphoserine modification. Glycyl lysine isopeptide (Lys-Gly) (interchain with G-Cter in SUMO2) cross-links involve residues K502 and Q562. Residues S579 to S610 are compositionally biased toward low complexity. Residues S579–D621 form a disordered region.

Belongs to the PIAS family. As to quaternary structure, binds SUMO1 and UBE2I. Interacts with AXIN1, JUN, MDM2, PARK7, TP53 and TP73 isoform alpha, but not TP73 isoform beta. Interacts with STAT4 following IL12 and IFN-alpha stimulation of T-cells. Interacts also with GTF2I, GTF2IRD1, IKFZ1, DAB2 and MSX2, as well as with several steroid receptors, including ESR1, ESR2, NR3C1, PGR, AR, and with NCOA2. Sumoylation of a target protein seems to enhance the interaction. Binds to sumoylated ELK1. Binds DNA, such as CDKN1A promoter, in a sequence-specific manner. Interacts with PLAG1. Interacts with KLF8; the interaction results in SUMO ligation and repression of KLF8 transcriptional activity and of its cell cycle progression into G(1) phase. PIAS2-beta interacts with IFIH1/MDA5. Isoform PIAS2-alpha interacts with PML (isoform PML-12). Interacts with PRDM1/Blimp-1. Sumoylated. Mainly expressed in testis. Isoform 3 is expressed predominantly in adult testis, weakly in pancreas, embryonic testis and sperm, and at very low levels in other organs.

It is found in the nucleus speckle. Its subcellular location is the nucleus. It localises to the PML body. Its pathway is protein modification; protein sumoylation. Functionally, functions as an E3-type small ubiquitin-like modifier (SUMO) ligase, stabilizing the interaction between UBE2I and the substrate, and as a SUMO-tethering factor. Plays a crucial role as a transcriptional coregulator in various cellular pathways, including the STAT pathway, the p53 pathway and the steroid hormone signaling pathway. The effects of this transcriptional coregulation, transactivation or silencing may vary depending upon the biological context and the PIAS2 isoform studied. However, it seems to be mostly involved in gene silencing. Binds to sumoylated ELK1 and enhances its transcriptional activity by preventing recruitment of HDAC2 by ELK1, thus reversing SUMO-mediated repression of ELK1 transactivation activity. Isoform PIAS2-beta, but not isoform PIAS2-alpha, promotes MDM2 sumoylation. Isoform PIAS2-alpha promotes PARK7 sumoylation. Isoform PIAS2-beta promotes NCOA2 sumoylation more efficiently than isoform PIAS2-alpha. Isoform PIAS2-alpha sumoylates PML at'Lys-65' and 'Lys-160'. The sequence is that of E3 SUMO-protein ligase PIAS2 (PIAS2) from Homo sapiens (Human).